The following is a 306-amino-acid chain: Agmatinase (306 aa).

Mn(2+) is bound by residues His-126, Asp-149, His-151, Asp-153, Asp-230, and Asp-232.

Belongs to the arginase family. Agmatinase subfamily. Mn(2+) serves as cofactor.

It carries out the reaction agmatine + H2O = urea + putrescine. It functions in the pathway amine and polyamine biosynthesis; putrescine biosynthesis via agmatine pathway; putrescine from agmatine: step 1/1. Its function is as follows. Catalyzes the formation of putrescine from agmatine. This chain is Agmatinase, found in Salmonella agona (strain SL483).